Reading from the N-terminus, the 704-residue chain is Protein NPG1 (704 aa).

8 TPR repeats span residues 24-57 (NGICMKTTEVEAKLDEGNIQEAESSLREGLSLNF), 58-90 (EEARALLGRLEYQRGNLEGALRVFEGIDLQAAI), 177-210 (SHAVELLPALWKESGDYQEAISAYRRALLSQWNL), 309-342 (IERWNTLALSYSAAGQNSAAVNLLRKSLHKHEQP), 430-463 (PDLIFELGVQYAEQRNLKAASRYAKEFIDATGGS), 555-588 (FEVWHGLAYLYSSLSHWNDVEVCLKKAGELKQYS), 589-622 (ASMLHTEGRMWEGRKEFKPALAAFLDGLLLDGSS), and 662-695 (RKAWYYLGMVHKSDGRIADATDCFQAASMLEESD).

Interacts with calmodulin in a calcium-dependent manner. As to expression, expressed only in pollen and in pollen tubes.

Its function is as follows. Calmodulin-binding protein essential for pollen germination, but not necessary for microsporogenesis or gametogenesis. The protein is Protein NPG1 of Arabidopsis thaliana (Mouse-ear cress).